The chain runs to 371 residues: Leu/Ile/Val-binding protein homolog 1 (371 aa).

Positions 1–23 are cleaved as a signal peptide; it reads MRKTLFSGVALAAVIAFGGSAWA.

The protein belongs to the leucine-binding protein family.

In terms of biological role, component of an amino-acid transport system. This is Leu/Ile/Val-binding protein homolog 1 from Brucella suis biovar 1 (strain 1330).